The primary structure comprises 305 residues: MKPSSSCNLLTILGPTASGKTRLAVSLARELSGEIISADSRQVFRRMDIGTGKDLHEYGAVPYHLIDVLEPGQECSVFTFQRLFLRAFQDISARGQLPILCGGTGLYLDAALRGYRMVEVPENPRLRTELANKSDTELAAILLHLVPDQHNRTDLADRNRTIRAIEIASYQPDEQEEQEPFPAIQPLVLGIRWDRAELRRRITQRLRQRLEAGMLDEIQQLHTGGVAWERLDYYGLEYRYGGLFLRGELNRNDLFQKLNAAIHDFAKRQETWFRRMERNGVTIHWLDGAGDPVAGARKVISGYFA.

Residue 14 to 21 (GPTASGKT) participates in ATP binding. 16–21 (TASGKT) lines the substrate pocket. The interaction with substrate tRNA stretch occupies residues 39–42 (DSRQ).

Belongs to the IPP transferase family. As to quaternary structure, monomer. The cofactor is Mg(2+).

It carries out the reaction adenosine(37) in tRNA + dimethylallyl diphosphate = N(6)-dimethylallyladenosine(37) in tRNA + diphosphate. Functionally, catalyzes the transfer of a dimethylallyl group onto the adenine at position 37 in tRNAs that read codons beginning with uridine, leading to the formation of N6-(dimethylallyl)adenosine (i(6)A). In Trichlorobacter lovleyi (strain ATCC BAA-1151 / DSM 17278 / SZ) (Geobacter lovleyi), this protein is tRNA dimethylallyltransferase 2.